A 99-amino-acid chain; its full sequence is Aspartyl/glutamyl-tRNA(Asn/Gln) amidotransferase subunit C (99 aa).

Belongs to the GatC family. As to quaternary structure, heterotrimer of A, B and C subunits.

It carries out the reaction L-glutamyl-tRNA(Gln) + L-glutamine + ATP + H2O = L-glutaminyl-tRNA(Gln) + L-glutamate + ADP + phosphate + H(+). The enzyme catalyses L-aspartyl-tRNA(Asn) + L-glutamine + ATP + H2O = L-asparaginyl-tRNA(Asn) + L-glutamate + ADP + phosphate + 2 H(+). Its function is as follows. Allows the formation of correctly charged Asn-tRNA(Asn) or Gln-tRNA(Gln) through the transamidation of misacylated Asp-tRNA(Asn) or Glu-tRNA(Gln) in organisms which lack either or both of asparaginyl-tRNA or glutaminyl-tRNA synthetases. The reaction takes place in the presence of glutamine and ATP through an activated phospho-Asp-tRNA(Asn) or phospho-Glu-tRNA(Gln). This chain is Aspartyl/glutamyl-tRNA(Asn/Gln) amidotransferase subunit C, found in Paraburkholderia xenovorans (strain LB400).